The following is a 415-amino-acid chain: MVIELRDTDIIWRNARLATMDPAVNAAYGLLKEYDLVVRDDKILAILPTAALQTSRCQVIDVQQRLITPGLIDCHTHLVFGGNRAYEWEQRLNGMSYAELSAQGGGINATVSATRASSHEQLERSAQQRLTAFMAEGVTTIEIKSGYGLNLENEEKLLQVVQHLAQHNPIEISPTLLAAHTCPPEYKHNPDAYMDLICEDILPQLWQKGLFEAVDVFCESVGFNLAQTERLFQAAQRWNIPVKGHVEQLSHLGGSELVARYHGLSVDHIEYLDQAGVESLSHSGTVAVLLPGAFYFLQETRCPPIDLLRQFNVPIAVSTDFNPGTSPFASLRMAMNMACVQFGLTPEEVWLGVTRHAARALGREPRHGQLRAGAYADFVVWDAENPVDIFYELGHNPLNTRVFRGVMTHSSIYNR.

H75 and H77 together coordinate Fe(3+). Zn(2+) is bound by residues H75 and H77. Residues R84, Y147, and H180 each coordinate 4-imidazolone-5-propanoate. N-formimidoyl-L-glutamate is bound at residue Y147. Position 245 (H245) interacts with Fe(3+). H245 serves as a coordination point for Zn(2+). Q248 lines the 4-imidazolone-5-propanoate pocket. D320 provides a ligand contact to Fe(3+). D320 is a Zn(2+) binding site. 2 residues coordinate N-formimidoyl-L-glutamate: N322 and G324. T325 provides a ligand contact to 4-imidazolone-5-propanoate.

Belongs to the metallo-dependent hydrolases superfamily. HutI family. It depends on Zn(2+) as a cofactor. Requires Fe(3+) as cofactor.

The protein localises to the cytoplasm. It catalyses the reaction 4-imidazolone-5-propanoate + H2O = N-formimidoyl-L-glutamate. Its pathway is amino-acid degradation; L-histidine degradation into L-glutamate; N-formimidoyl-L-glutamate from L-histidine: step 3/3. Functionally, catalyzes the hydrolytic cleavage of the carbon-nitrogen bond in imidazolone-5-propanoate to yield N-formimidoyl-L-glutamate. It is the third step in the universal histidine degradation pathway. This chain is Imidazolonepropionase, found in Photorhabdus laumondii subsp. laumondii (strain DSM 15139 / CIP 105565 / TT01) (Photorhabdus luminescens subsp. laumondii).